The sequence spans 344 residues: Dihydroorotase (344 aa).

The Zn(2+) site is built by His14 and His16. Substrate contacts are provided by residues 16–18 (HLR) and Asn42. Zn(2+)-binding residues include Lys100, His137, and His175. Residue Lys100 is modified to N6-carboxylysine. Substrate is bound at residue His137. Position 220 (Leu220) interacts with substrate. Asp248 is a Zn(2+) binding site. The active site involves Asp248. 2 residues coordinate substrate: His252 and Ala264.

It belongs to the metallo-dependent hydrolases superfamily. DHOase family. Class II DHOase subfamily. As to quaternary structure, homodimer. It depends on Zn(2+) as a cofactor.

The enzyme catalyses (S)-dihydroorotate + H2O = N-carbamoyl-L-aspartate + H(+). It functions in the pathway pyrimidine metabolism; UMP biosynthesis via de novo pathway; (S)-dihydroorotate from bicarbonate: step 3/3. Its function is as follows. Catalyzes the reversible cyclization of carbamoyl aspartate to dihydroorotate. This is Dihydroorotase from Roseobacter denitrificans (strain ATCC 33942 / OCh 114) (Erythrobacter sp. (strain OCh 114)).